The primary structure comprises 227 residues: Orotidine 5'-phosphate decarboxylase (227 aa).

Substrate is bound by residues Asp-8, Lys-30, 59–68 (DLKLYDIPYT), Thr-118, Arg-178, Gln-187, Gly-207, and Arg-208. The Proton donor role is filled by Lys-61.

This sequence belongs to the OMP decarboxylase family. Type 1 subfamily. Homodimer.

The catalysed reaction is orotidine 5'-phosphate + H(+) = UMP + CO2. Its pathway is pyrimidine metabolism; UMP biosynthesis via de novo pathway; UMP from orotate: step 2/2. In terms of biological role, catalyzes the decarboxylation of orotidine 5'-monophosphate (OMP) to uridine 5'-monophosphate (UMP). The polypeptide is Orotidine 5'-phosphate decarboxylase (Helicobacter pylori (strain P12)).